Consider the following 516-residue polypeptide: Myocyte-specific enhancer factor 2A homolog (516 aa).

Residues 1 to 100 (MGRKKIQITR…KGLNGCESPD (100 aa)) form an interaction with hdac9 region. The 55-residue stretch at 3–57 (RKKIQITRIMDERNRQVTFTKRKFGLMKKAYELSVLCDCEIALIIFNSSNKLFQY) folds into the MADS-box domain. The mef2-type DNA-binding region spans 58-86 (ASTDMDKVLLKYTEYNEPHESRTNSDIVE). Residues 318–339 (PSSKGMMPPLNTQRVTSSQGTQ) are disordered. Polar residues predominate over residues 327–339 (LNTQRVTSSQGTQ). Threonine 343 is modified (phosphothreonine; by NLK). A Phosphoserine; by NLK modification is found at serine 386. Residues 420-433 (GSNLSINTNQNINI) are compositionally biased toward polar residues. The tract at residues 420-516 (GSNLSINTNQ…KRMRMDAWVT (97 aa)) is disordered. A compositionally biased stretch (low complexity) spans 465–475 (DSLSSSSSSYD). Composition is skewed to basic and acidic residues over residues 476–486 (GSDREDVRNDF) and 497–516 (NNED…AWVT).

It belongs to the MEF2 family. As to quaternary structure, interacts with hdac9 and nlk2. As to expression, restricted to the somitic mesoderm of early embryos. Expressed in the head region of neurula stage embryos and in body muscle (myotomes) of the tadpole. Expressed in all tissues examined in the adult.

It is found in the nucleus. Functionally, may regulate muscle-specific transcription in the embryo and may regulate transcription of a variety of cell types in the adult. Binds to the sequence 5'-CTA[TA]4TAR-3'. Acts downstream of nlk2 in anterior neural development, including eye formation. The chain is Myocyte-specific enhancer factor 2A homolog (mef2a) from Xenopus laevis (African clawed frog).